The sequence spans 270 residues: uncharacterized protein (270 aa).

The first 23 residues, 1–23 (MKKLLIILAATLVLVLGSSGNFR), serve as a signal peptide directing secretion.

This is an uncharacterized protein from Archaeoglobus fulgidus (strain ATCC 49558 / DSM 4304 / JCM 9628 / NBRC 100126 / VC-16).